Reading from the N-terminus, the 345-residue chain is Phosphoribosylformylglycinamidine cyclo-ligase (345 aa).

Belongs to the AIR synthase family.

It localises to the cytoplasm. It catalyses the reaction 2-formamido-N(1)-(5-O-phospho-beta-D-ribosyl)acetamidine + ATP = 5-amino-1-(5-phospho-beta-D-ribosyl)imidazole + ADP + phosphate + H(+). It participates in purine metabolism; IMP biosynthesis via de novo pathway; 5-amino-1-(5-phospho-D-ribosyl)imidazole from N(2)-formyl-N(1)-(5-phospho-D-ribosyl)glycinamide: step 2/2. In Methylococcus capsulatus (strain ATCC 33009 / NCIMB 11132 / Bath), this protein is Phosphoribosylformylglycinamidine cyclo-ligase.